The chain runs to 195 residues: MAQEKMKLGFKSLPSSTTADGNILRRVNSAPLINGLGFNSQVLQADMLRIRTNRTTFRNRRSLLLPPPPFHGSISRLHQIKQEEAMDLINRETMSEWKLQSEIQISHSWEEGLKLVKWHFNINQKRFSKAQPTCFLLILPNCQKIMCIYFQLLLMETTAMLDLLVIRQLKSALSQTLLCHLLILVLICSSRQTFN.

Belongs to the FAM122 family.

The polypeptide is PABIR family member 1 (Homo sapiens (Human)).